A 175-amino-acid polypeptide reads, in one-letter code: Probable DNA-directed RNA polymerase subunit delta (175 aa).

In terms of domain architecture, HTH HARE-type spans 14-81; sequence MALVEIAHEI…SDQTWGLRSW (68 aa). Residues 110–175 form a disordered region; it reads LDLDEFEEVD…YDDEEEDRKD (66 aa).

This sequence belongs to the RpoE family. In terms of assembly, RNAP is composed of a core of 2 alpha, a beta and a beta' subunits. The core is associated with a delta subunit and one of several sigma factors.

Its function is as follows. Participates in both the initiation and recycling phases of transcription. In the presence of the delta subunit, RNAP displays an increased specificity of transcription, a decreased affinity for nucleic acids, and an increased efficiency of RNA synthesis because of enhanced recycling. The chain is Probable DNA-directed RNA polymerase subunit delta from Bacillus velezensis (strain DSM 23117 / BGSC 10A6 / LMG 26770 / FZB42) (Bacillus amyloliquefaciens subsp. plantarum).